Here is a 270-residue protein sequence, read N- to C-terminus: NADPH-dependent 7-cyano-7-deazaguanine reductase (270 aa).

79 to 81 is a binding site for substrate; that stretch reads IES. Position 81 to 82 (81 to 82) interacts with NADPH; that stretch reads SK. Cys177 (thioimide intermediate) is an active-site residue. Asp184 (proton donor) is an active-site residue. 216–217 contributes to the substrate binding site; sequence HE. Residue 245–246 coordinates NADPH; it reads RG.

It belongs to the GTP cyclohydrolase I family. QueF type 2 subfamily. Homodimer.

The protein localises to the cytoplasm. It catalyses the reaction 7-aminomethyl-7-carbaguanine + 2 NADP(+) = 7-cyano-7-deazaguanine + 2 NADPH + 3 H(+). Its pathway is tRNA modification; tRNA-queuosine biosynthesis. Catalyzes the NADPH-dependent reduction of 7-cyano-7-deazaguanine (preQ0) to 7-aminomethyl-7-deazaguanine (preQ1). In Acinetobacter baumannii (strain ATCC 17978 / DSM 105126 / CIP 53.77 / LMG 1025 / NCDC KC755 / 5377), this protein is NADPH-dependent 7-cyano-7-deazaguanine reductase.